The sequence spans 523 residues: Nondiscriminating glutamyl-tRNA synthetase EARS2, mitochondrial (523 aa).

A mitochondrion-targeting transit peptide spans 1–41; the sequence is MAALLRRLLQRERPSAASGRPVGRREANLGTDAGVAVRVRF. 40–42 contacts L-glutamate; the sequence is RFA. The 'HIGH' region signature appears at 45–53; that stretch reads PTGFLHLGG. Position 50 (H50) interacts with ATP. Residues E76, 228-232, and R246 each bind L-glutamate; that span reads YHLAC. Residue E249 coordinates ATP. K256 bears the N6-succinyllysine mark. 284 to 288 contributes to the ATP binding site; sequence KLSKR. Positions 284–288 match the 'KMSKS' region motif; that stretch reads KLSKR. K486 carries the post-translational modification N6-acetyllysine.

It belongs to the class-I aminoacyl-tRNA synthetase family. Glutamate--tRNA ligase type 1 subfamily.

The protein resides in the mitochondrion matrix. It catalyses the reaction tRNA(Glx) + L-glutamate + ATP = L-glutamyl-tRNA(Glx) + AMP + diphosphate. The enzyme catalyses tRNA(Glu) + L-glutamate + ATP = L-glutamyl-tRNA(Glu) + AMP + diphosphate. It carries out the reaction tRNA(Gln) + L-glutamate + ATP = L-glutamyl-tRNA(Gln) + AMP + diphosphate. Non-discriminating glutamyl-tRNA synthetase that catalyzes aminoacylation of both mitochondrial tRNA(Glu) and tRNA(Gln) and participates in RNA aminoacylation for mitochondrial protein translation. Attachs glutamate to tRNA(Glu) or tRNA(Gln) in a two-step reaction: glutamate is first activated by ATP to form Glu-AMP and then transferred to the acceptor end of tRNA(Glu) or tRNA(Gln). In vitro, cytoplasmic tRNA(Gln) is slightly glutamylated, but with low activity. The chain is Nondiscriminating glutamyl-tRNA synthetase EARS2, mitochondrial from Homo sapiens (Human).